Reading from the N-terminus, the 519-residue chain is Ent-kaurene oxidase (519 aa).

Residues 1 to 10 lie on the Chloroplast intermembrane side of the membrane; the sequence is MDTLLSLQAV. The helical transmembrane segment at 11–31 threads the bilayer; that stretch reads PAAAAIGGPVVAIGGITLFFI. The Cytoplasmic segment spans residues 32 to 519; sequence REYVKDQRKK…PRLRDRVCVS (488 aa). Residue Cys-458 coordinates heme.

This sequence belongs to the cytochrome P450 family. It depends on heme as a cofactor.

It localises to the plastid. The protein resides in the chloroplast outer membrane. The catalysed reaction is ent-kaur-16-ene + 3 reduced [NADPH--hemoprotein reductase] + 3 O2 = ent-kaur-16-en-19-oate + 3 oxidized [NADPH--hemoprotein reductase] + 4 H2O + 4 H(+). It functions in the pathway plant hormone biosynthesis; gibberellin biosynthesis. Functionally, catalyzes three successive oxidations of the 4-methyl group of ent-kaurene giving kaurenoic acid, a key step in gibberellins (GAs) biosynthesis. GAs, which are involved many processes, including stem elongation, play a central role in plant development. The protein is Ent-kaurene oxidase of Salvia miltiorrhiza (Chinese sage).